The sequence spans 450 residues: Tubulin alpha-1 chain (450 aa).

Glutamine 11 contacts GTP. The residue at position 40 (lysine 40) is an N6-acetyllysine. GTP-binding residues include glutamate 71, serine 140, glycine 144, threonine 145, threonine 179, asparagine 206, and asparagine 228. Glutamate 71 contacts Mg(2+). Residue glutamate 254 is part of the active site.

This sequence belongs to the tubulin family. In terms of assembly, dimer of alpha and beta chains. A typical microtubule is a hollow water-filled tube with an outer diameter of 25 nm and an inner diameter of 15 nM. Alpha-beta heterodimers associate head-to-tail to form protofilaments running lengthwise along the microtubule wall with the beta-tubulin subunit facing the microtubule plus end conferring a structural polarity. Microtubules usually have 13 protofilaments but different protofilament numbers can be found in some organisms and specialized cells. Interacts with Ote. Requires Mg(2+) as cofactor. Post-translationally, undergoes a tyrosination/detyrosination cycle, the cyclic removal and re-addition of a C-terminal tyrosine residue by the enzymes tubulin tyrosine carboxypeptidase (TTCP) and tubulin tyrosine ligase (TTL), respectively. Acetylation of alpha chains at Lys-40 stabilizes microtubules and affects affinity and processivity of microtubule motors. This modification has a role in multiple cellular functions, ranging from cell motility, cell cycle progression or cell differentiation to intracellular trafficking and signaling. During the early stages of oogenesis lky/Alpha-tubulin N-acetyltransferase 2 is the main acetyltransferase responsible for Lys-40 acetylation in germline cells while Atat/alpha-tubulin N-acetyltransferase 1 is the main acetyltransferase responsible for Lys-40 acetylation in somatic cells.

It is found in the cytoplasm. It localises to the cytoskeleton. It catalyses the reaction GTP + H2O = GDP + phosphate + H(+). In terms of biological role, tubulin is the major constituent of microtubules, a cylinder consisting of laterally associated linear protofilaments composed of alpha- and beta-tubulin heterodimers. Microtubules grow by the addition of GTP-tubulin dimers to the microtubule end, where a stabilizing cap forms. Below the cap, tubulin dimers are in GDP-bound state, owing to GTPase activity of alpha-tubulin. The chain is Tubulin alpha-1 chain (alphaTub84B) from Drosophila melanogaster (Fruit fly).